The following is a 392-amino-acid chain: Ribosomal RNA large subunit methyltransferase G (392 aa).

The protein belongs to the methyltransferase superfamily. RlmG family.

The protein resides in the cytoplasm. The catalysed reaction is guanosine(1835) in 23S rRNA + S-adenosyl-L-methionine = N(2)-methylguanosine(1835) in 23S rRNA + S-adenosyl-L-homocysteine + H(+). Functionally, specifically methylates the guanine in position 1835 (m2G1835) of 23S rRNA. This chain is Ribosomal RNA large subunit methyltransferase G, found in Colwellia psychrerythraea (strain 34H / ATCC BAA-681) (Vibrio psychroerythus).